The following is a 200-amino-acid chain: Dephospho-CoA kinase (200 aa).

One can recognise a DPCK domain in the interval 3 to 200 (VLGLTGSIGM…LSGKPAAATR (198 aa)). Residue 11 to 16 (GMGKTT) coordinates ATP.

The protein belongs to the CoaE family.

It is found in the cytoplasm. It carries out the reaction 3'-dephospho-CoA + ATP = ADP + CoA + H(+). Its pathway is cofactor biosynthesis; coenzyme A biosynthesis; CoA from (R)-pantothenate: step 5/5. Catalyzes the phosphorylation of the 3'-hydroxyl group of dephosphocoenzyme A to form coenzyme A. The polypeptide is Dephospho-CoA kinase (Brucella melitensis biotype 1 (strain ATCC 23456 / CCUG 17765 / NCTC 10094 / 16M)).